The primary structure comprises 313 residues: Probable 5-dehydro-4-deoxyglucarate dehydratase (313 aa).

Belongs to the DapA family.

It catalyses the reaction 5-dehydro-4-deoxy-D-glucarate + H(+) = 2,5-dioxopentanoate + CO2 + H2O. Its pathway is carbohydrate acid metabolism; D-glucarate degradation; 2,5-dioxopentanoate from D-glucarate: step 2/2. The polypeptide is Probable 5-dehydro-4-deoxyglucarate dehydratase (Bradyrhizobium sp. (strain BTAi1 / ATCC BAA-1182)).